The chain runs to 459 residues: MKTVILSVNAGSSSVKLSAYTAEQGQSPIQIAEVQVSGLTAPPASLKYERGGKTIVKSREVDDQVSDQRDAFSLILKTLIEDDDLHDIQTKDDIGIICHRIVHGGDYTKPQLITNGTYHHLENLNDLAPLHNANSLPIVRLCVQDFPSARNVACFDSQFHSTIPEHIRTYPINQDIARRGRLRKYGFHGISYSFITRATAEFLGKDPSDVNIIALHLGSGASACAIKGGKSWDTSMGLTPLAGLPGATRSGSVDPSLVFHYASDVGKLSPASTKDLHISRAEEILNKQAGWKALTGTTDFRVIAAAATTTSSPTPSPNPNPNPNPDPNPDPNPDPQNQNHRLAFALLVDRISAFVGAYYVSLHGRVDALVFAGGIGERSAALRAAVVEQVGCLGFAADGDEDFDGDGGEGAVVVDVGREAAGGSDLGGRPRPRVLVCRTDEQFEMARMCAEDAEFWGSG.

Residue Asn-9 participates in Mg(2+) binding. Lys-16 is a binding site for ATP. Arg-100 serves as a coordination point for substrate. The Proton donor/acceptor role is filled by Asp-156. ATP-binding positions include 216–220 and 299–301; these read HLGSG and DFR. Residues 308–338 are disordered; the sequence is TTTSSPTPSPNPNPNPNPDPNPDPNPDPQNQ. Residues 314–334 show a composition bias toward pro residues; that stretch reads TPSPNPNPNPNPDPNPDPNPD. Glu-441 provides a ligand contact to Mg(2+).

The protein belongs to the acetokinase family. The cofactor is Mg(2+).

The enzyme catalyses acetate + ATP = acetyl phosphate + ADP. It participates in metabolic intermediate biosynthesis; acetyl-CoA biosynthesis; acetyl-CoA from acetate: step 1/2. This chain is Probable acetate kinase, found in Chaetomium globosum (strain ATCC 6205 / CBS 148.51 / DSM 1962 / NBRC 6347 / NRRL 1970) (Soil fungus).